The following is a 210-amino-acid chain: Hydrogenase expression/formation protein HupD (210 aa).

The Ni(2+) site is built by E22, D68, and H99.

It belongs to the peptidase A31 family.

Not known. Could be involved in the processing of hydrogenase. The protein is Hydrogenase expression/formation protein HupD (hupD) of Rhodobacter capsulatus (Rhodopseudomonas capsulata).